The following is a 71-amino-acid chain: Protein DP71L (71 aa).

Important for host CHOP inhibition stretches follow at residues 16–18 and 57–61; these read VRF and LSTVL.

It belongs to the asfivirus DP71L family. In terms of assembly, interacts (via C-terminus) with host PPP1CB.

Functionally, interacts with the host phosphatase PP1 catalytic subunit (PPP1CB) and recruits it to dephosphorylate EIF2S1/eIF2alpha and therefore restores the host translation that has been shut-down by the host. Also inhibits the EIF2S1/eIF2alpha-ATF4-DDIT3/CHOP pathway. The sequence is that of Protein DP71L from African swine fever virus (strain Badajoz 1971 Vero-adapted) (Ba71V).